The chain runs to 235 residues: Claudin-15 (235 aa).

A topological domain (cytoplasmic) is located at residue methionine 1. Residues 2–24 (LVAVEIFGFFLTAVGLLMLGVTL) form a helical membrane-spanning segment. At 25 to 74 (AHSSWRVSTVHGNVITTNTIFENLWYSCATDSMGVHNCWEFPSMLALSGY) the chain is on the extracellular side. An intrachain disulfide couples cysteine 52 to cysteine 62. Residues 75–99 (IQACRALMITAILLGFLGLFLGMVG) form a helical membrane-spanning segment. Over 100–115 (LRCTNIGGLELSRKTK) the chain is Cytoplasmic. Serine 111 carries the post-translational modification Phosphoserine. The chain crosses the membrane as a helical span at residues 116 to 140 (LAATAGALHILAGICGMVAVSWYAF). The Extracellular segment spans residues 141–159 (NITRDFFNPLYAGTKYELG). The tract at residues 146-147 (FF) is important for the formation of tight-junction strand-like structures. A helical membrane pass occupies residues 160–182 (PALYLGWSACLLAILGGICLFSN). At 183-235 (CCCSRDRDPATGVQLPYKAPVIPAASLAARLPAAASDEEGDSSFGKYGKNAYV) the chain is on the cytoplasmic side. A phosphoserine mark is found at serine 218 and serine 225.

The protein belongs to the claudin family. In terms of assembly, can form homo- and heteropolymeric tight junction strands. In terms of processing, palmitoylated.

It localises to the cell junction. The protein resides in the tight junction. Its subcellular location is the cell membrane. It carries out the reaction Na(+)(in) = Na(+)(out). The enzyme catalyses K(+)(in) = K(+)(out). The catalysed reaction is Cs(+)(in) = Cs(+)(out). It catalyses the reaction Rb(+)(in) = Rb(+)(out). It carries out the reaction Li(+)(in) = Li(+)(out). The enzyme catalyses NH4(+)(in) = NH4(+)(out). The catalysed reaction is methylamine(out) = methylamine(in). It catalyses the reaction H2O(in) = H2O(out). Its function is as follows. Forms paracellular channels: polymerizes in tight junction strands with cation- and water-selective channels through the strands, conveying epithelial permeability in a process known as paracellular tight junction permeability. In intestinal epithelium, allows for sodium and water fluxes from the peritoneal side to the lumen of the intestine to regulate nutrient absorption and intestinal morphogenesis. The protein is Claudin-15 (CLDN15) of Bos taurus (Bovine).